A 317-amino-acid chain; its full sequence is Mitochondrial thiamine pyrophosphate carrier 1 (317 aa).

Transmembrane regions (helical) follow at residues 15 to 37 (TVSW…MATA), 80 to 100 (IPAT…YSWF), 118 to 138 (LTVG…LDLL), 168 to 190 (GFFT…MFLT), 205 to 227 (FWSR…TMVF), and 281 to 300 (GLTM…LFVY). Solcar repeat units follow at residues 16 to 103 (VSWY…FNNV), 112 to 197 (SQQG…VNIV), and 206 to 306 (WSRP…TMDL).

Belongs to the mitochondrial carrier (TC 2.A.29) family.

The protein localises to the mitochondrion inner membrane. Functionally, mitochondrial transporter that mediates uptake of thiamine pyrophosphate (ThPP) into mitochondria. The sequence is that of Mitochondrial thiamine pyrophosphate carrier 1 (TPC1) from Kluyveromyces lactis (strain ATCC 8585 / CBS 2359 / DSM 70799 / NBRC 1267 / NRRL Y-1140 / WM37) (Yeast).